The sequence spans 498 residues: ATP synthase subunit beta, chloroplastic (498 aa).

Residues 1–14 (MRTNPTTSRPGVST) are compositionally biased toward polar residues. The disordered stretch occupies residues 1–20 (MRTNPTTSRPGVSTSEEKST). Position 172–179 (172–179 (GGAGVGKT)) interacts with ATP.

Belongs to the ATPase alpha/beta chains family. As to quaternary structure, F-type ATPases have 2 components, CF(1) - the catalytic core - and CF(0) - the membrane proton channel. CF(1) has five subunits: alpha(3), beta(3), gamma(1), delta(1), epsilon(1). CF(0) has four main subunits: a(1), b(1), b'(1) and c(9-12).

It is found in the plastid. Its subcellular location is the chloroplast thylakoid membrane. The catalysed reaction is ATP + H2O + 4 H(+)(in) = ADP + phosphate + 5 H(+)(out). Its function is as follows. Produces ATP from ADP in the presence of a proton gradient across the membrane. The catalytic sites are hosted primarily by the beta subunits. The sequence is that of ATP synthase subunit beta, chloroplastic from Hordeum vulgare (Barley).